A 360-amino-acid polypeptide reads, in one-letter code: UDP-N-acetylglucosamine--N-acetylmuramyl-(pentapeptide) pyrophosphoryl-undecaprenol N-acetylglucosamine transferase (360 aa).

UDP-N-acetyl-alpha-D-glucosamine is bound by residues serine 198 and glutamine 289.

Belongs to the glycosyltransferase 28 family. MurG subfamily.

It is found in the cell membrane. It carries out the reaction Mur2Ac(oyl-L-Ala-gamma-D-Glu-L-Lys-D-Ala-D-Ala)-di-trans,octa-cis-undecaprenyl diphosphate + UDP-N-acetyl-alpha-D-glucosamine = beta-D-GlcNAc-(1-&gt;4)-Mur2Ac(oyl-L-Ala-gamma-D-Glu-L-Lys-D-Ala-D-Ala)-di-trans,octa-cis-undecaprenyl diphosphate + UDP + H(+). It participates in cell wall biogenesis; peptidoglycan biosynthesis. Cell wall formation. Catalyzes the transfer of a GlcNAc subunit on undecaprenyl-pyrophosphoryl-MurNAc-pentapeptide (lipid intermediate I) to form undecaprenyl-pyrophosphoryl-MurNAc-(pentapeptide)GlcNAc (lipid intermediate II). This is UDP-N-acetylglucosamine--N-acetylmuramyl-(pentapeptide) pyrophosphoryl-undecaprenol N-acetylglucosamine transferase from Streptococcus pyogenes serotype M4 (strain MGAS10750).